Reading from the N-terminus, the 156-residue chain is Small ribosomal subunit protein uS7 (156 aa).

The protein belongs to the universal ribosomal protein uS7 family. In terms of assembly, part of the 30S ribosomal subunit. Contacts proteins S9 and S11.

In terms of biological role, one of the primary rRNA binding proteins, it binds directly to 16S rRNA where it nucleates assembly of the head domain of the 30S subunit. Is located at the subunit interface close to the decoding center, probably blocks exit of the E-site tRNA. The chain is Small ribosomal subunit protein uS7 from Erwinia tasmaniensis (strain DSM 17950 / CFBP 7177 / CIP 109463 / NCPPB 4357 / Et1/99).